An 877-amino-acid chain; its full sequence is Valine--tRNA ligase (877 aa).

The short motif at 46–56 (PYPTGSIHMGH) is the 'HIGH' region element. Residues 529–533 (KMSKS) carry the 'KMSKS' region motif. Lys532 contacts ATP.

It belongs to the class-I aminoacyl-tRNA synthetase family. ValS type 2 subfamily.

Its subcellular location is the cytoplasm. It carries out the reaction tRNA(Val) + L-valine + ATP = L-valyl-tRNA(Val) + AMP + diphosphate. Catalyzes the attachment of valine to tRNA(Val). As ValRS can inadvertently accommodate and process structurally similar amino acids such as threonine, to avoid such errors, it has a 'posttransfer' editing activity that hydrolyzes mischarged Thr-tRNA(Val) in a tRNA-dependent manner. The sequence is that of Valine--tRNA ligase from Methanothermobacter thermautotrophicus (strain ATCC 29096 / DSM 1053 / JCM 10044 / NBRC 100330 / Delta H) (Methanobacterium thermoautotrophicum).